A 461-amino-acid polypeptide reads, in one-letter code: D-arabinono-1,4-lactone oxidase (461 aa).

An FAD-binding PCMH-type domain is found at 24 to 194; the sequence is FSAISLGLRC…VDITISVVPA (171 aa). Residue His61 is modified to Pros-8alpha-FAD histidine.

The protein belongs to the oxygen-dependent FAD-linked oxidoreductase family. FAD is required as a cofactor.

The protein localises to the mitochondrion membrane. It carries out the reaction D-arabinono-1,4-lactone + O2 = dehydro-D-arabinono-1,4-lactone + H2O2 + H(+). Its pathway is cofactor biosynthesis; D-erythroascorbate biosynthesis; dehydro-D-arabinono-1,4-lactone from D-arabinose: step 2/2. The protein is D-arabinono-1,4-lactone oxidase (alo1) of Schizosaccharomyces pombe (strain 972 / ATCC 24843) (Fission yeast).